The primary structure comprises 379 residues: Tryptophan 2,3-dioxygenase (379 aa).

Residues Phe57 to His61 and Arg128 each bind substrate. A heme-binding site is contributed by His312. Thr327 contributes to the substrate binding site.

The protein belongs to the tryptophan 2,3-dioxygenase family. As to quaternary structure, homotetramer. Dimer of dimers. Heme is required as a cofactor.

It catalyses the reaction L-tryptophan + O2 = N-formyl-L-kynurenine. Its pathway is amino-acid degradation; L-tryptophan degradation via kynurenine pathway; L-kynurenine from L-tryptophan: step 1/2. It participates in pigment biosynthesis; ommochrome biosynthesis. Its function is as follows. Heme-dependent dioxygenase that catalyzes the oxidative cleavage of the L-tryptophan (L-Trp) pyrrole ring and converts L-tryptophan to N-formyl-L-kynurenine. Catalyzes the oxidative cleavage of the indole moiety. This Drosophila yakuba (Fruit fly) protein is Tryptophan 2,3-dioxygenase.